We begin with the raw amino-acid sequence, 262 residues long: MIDKSAFVHPTAIVEEGASIGANAHIGPFCIVGPHVEIGEGTVLKSHVVVNGHTKIGRDNEIYQFASIGEVNQDLKYAGEPTRVEIGDRNRIRESVTIHRGTVQGGGLTKVGSDNLLMINAHIAHDCTVGNRCILANNATLAGHVSVDDFAIIGGMTAVHQFCIIGAHVMVGGCSGVAQDVPPYVIAQGNHATPFGVNTEGLKRRGFSREAITAIRNAYKLIYRSGKTLDEVKPEIAELAETYPEVKAFTDFFARSTRGLIR.

It belongs to the transferase hexapeptide repeat family. LpxA subfamily. As to quaternary structure, homotrimer.

It localises to the cytoplasm. The catalysed reaction is a (3R)-hydroxyacyl-[ACP] + UDP-N-acetyl-alpha-D-glucosamine = a UDP-3-O-[(3R)-3-hydroxyacyl]-N-acetyl-alpha-D-glucosamine + holo-[ACP]. It functions in the pathway glycolipid biosynthesis; lipid IV(A) biosynthesis; lipid IV(A) from (3R)-3-hydroxytetradecanoyl-[acyl-carrier-protein] and UDP-N-acetyl-alpha-D-glucosamine: step 1/6. Functionally, involved in the biosynthesis of lipid A, a phosphorylated glycolipid that anchors the lipopolysaccharide to the outer membrane of the cell. The sequence is that of Acyl-[acyl-carrier-protein]--UDP-N-acetylglucosamine O-acyltransferase from Shigella flexneri serotype 5b (strain 8401).